Reading from the N-terminus, the 151-residue chain is Prefoldin subunit 5 (151 aa).

Positions 15-35 (IDQLKALKEQADLEVNLLQDS) form a coiled coil.

This sequence belongs to the prefoldin subunit alpha family. In terms of assembly, heterohexamer of two PFD-alpha type and four PFD-beta type subunits forming prefoldin co-chaperone complex. Interacts with PFD6. Binds to the DELLA protein GAI.

It localises to the cytoplasm. The protein resides in the nucleus. Functionally, binds specifically to cytosolic chaperonin (c-CPN) and transfers target proteins to it. Binds to nascent polypeptide chain and promotes folding in an environment in which there are many competing pathways for nonnative proteins. Together with other chaperonins, contribute to the regulation of gene expression by modulating the spliceosome function on pre-mRNA splicing post-transcriptionally by acting as a co-chaperone of Hsp90 to control levels of LSM8. Required for the biogenesis of tubulins and for subsequent microtubules (MTs) organization and dynamicity. Necessary for tolerance to NaCl salt stress. Involved in the process leading to microtubules dissociation in response to gibberellic acid (GA) probably due to the DELLA proteins-mediated translocation of the prefoldin co-chaperone complex from the cytoplasm to the nucleus. Prevents cold acclimation (e.g. 7 days at 4 degrees Celsius) in a DELLA proteins-dependent manner by promoting nuclear proteasome-mediated HY5 degradation, thus modulating the expression of several genes and reducing anthocyanin biosynthesis, but seems not involved in constitutive freezing tolerance. Contributes to the GA-dependent regulation of PIN2 trafficking at the plasma membrane, thus influencing auxin flux. In Arabidopsis thaliana (Mouse-ear cress), this protein is Prefoldin subunit 5.